The following is an 86-amino-acid chain: Secreted transmembrane peptide 6 (86 aa).

The signal sequence occupies residues 1–31 (MGMKSPNIAAFMLPLLLILFTLSSQLKVVES). The SCOOP motif signature appears at 45–58 (IVYTPPSRSCGTSP). A SxS motif essential for MIK2 binding motif is present at residues 51–53 (SRS).

Belongs to the serine rich endogenous peptide (SCOOP) phytocytokine family. In terms of assembly, interacts with MIK2 (via extracellular leucine-rich repeat domain); this interaction triggers the formation of complex between MIK2 and the BAK1/SERK3 and SERK4 coreceptors, and subsequent BAK1 activation by phosphorylation. In terms of tissue distribution, mostly expressed in leaves, and, to a lower extent, in roots, stems, siliques, seeds and flowers.

It is found in the cell membrane. It localises to the secreted. Its subcellular location is the extracellular space. The protein localises to the apoplast. In terms of biological role, brassicaceae-specific phytocytokine (plant endogenous peptide released into the apoplast) perceived by MIK2 in a BAK1/SERK3 and SERK4 coreceptors-dependent manner, that modulates various physiological and antimicrobial processes including growth prevention and reactive oxygen species (ROS) response regulation. Prevents general growth and development. The sequence is that of Secreted transmembrane peptide 6 from Arabidopsis thaliana (Mouse-ear cress).